A 466-amino-acid chain; its full sequence is Asparagine--tRNA ligase (466 aa).

This sequence belongs to the class-II aminoacyl-tRNA synthetase family. In terms of assembly, homodimer.

It localises to the cytoplasm. The catalysed reaction is tRNA(Asn) + L-asparagine + ATP = L-asparaginyl-tRNA(Asn) + AMP + diphosphate + H(+). The sequence is that of Asparagine--tRNA ligase from Enterobacter sp. (strain 638).